The chain runs to 264 residues: Type III pantothenate kinase (264 aa).

6–13 (DVRNTSIE) provides a ligand contact to ATP. Substrate is bound at residue 109-112 (GADR). Catalysis depends on D111, which acts as the Proton acceptor. D131 contacts K(+). ATP is bound at residue T134. T185 is a substrate binding site.

It belongs to the type III pantothenate kinase family. Homodimer. NH4(+) serves as cofactor. Requires K(+) as cofactor.

The protein localises to the cytoplasm. The catalysed reaction is (R)-pantothenate + ATP = (R)-4'-phosphopantothenate + ADP + H(+). Its pathway is cofactor biosynthesis; coenzyme A biosynthesis; CoA from (R)-pantothenate: step 1/5. Functionally, catalyzes the phosphorylation of pantothenate (Pan), the first step in CoA biosynthesis. This Nocardia farcinica (strain IFM 10152) protein is Type III pantothenate kinase.